The sequence spans 1392 residues: Condensin complex subunit 1 (1392 aa).

An interaction with SMC2 and SMC4 region spans residues Met-1 to Pro-593. Ser-20 and Ser-575 each carry phosphoserine. Disordered regions lie at residues Glu-569 to Asp-602, Arg-945 to Met-966, and Phe-1293 to Ser-1392. Basic and acidic residues predominate over residues Arg-945–Ala-960. 4 positions are modified to phosphoserine: Ser-1300, Ser-1305, Ser-1320, and Ser-1323. Thr-1329 is subject to Phosphothreonine. The Bipartite nuclear localization signal signature appears at Pro-1332 to Lys-1353. Residues Gln-1344 to Lys-1353 show a composition bias toward basic residues. 4 positions are modified to phosphoserine: Ser-1358, Ser-1361, Ser-1362, and Ser-1367. The segment covering Glu-1360–Glu-1373 has biased composition (acidic residues). Residues Thr-1375 and Thr-1380 each carry the phosphothreonine; by CDK1 modification. A Phosphoserine modification is found at Ser-1386.

This sequence belongs to the CND1 (condensin subunit 1) family. Component of the condensin complex, which contains the SMC2 and SMC4 heterodimer, and three non SMC subunits that probably regulate the complex: NCAPH/BRRN1, NCAPD2/CAPD2 and NCAPG. Interacts with histones H1 and H3. Post-translationally, phosphorylated by CDK1. Its phosphorylation, as well as that of NCAPH and NCAPG subunits, activates the condensin complex and is required for chromosome condensation.

It is found in the nucleus. The protein localises to the cytoplasm. Its subcellular location is the chromosome. Regulatory subunit of the condensin complex, a complex required for conversion of interphase chromatin into mitotic-like condense chromosomes. The condensin complex probably introduces positive supercoils into relaxed DNA in the presence of type I topoisomerases and converts nicked DNA into positive knotted forms in the presence of type II topoisomerases. May target the condensin complex to DNA via its C-terminal domain. May promote the resolution of double-strand DNA catenanes (intertwines) between sister chromatids. Condensin-mediated compaction likely increases tension in catenated sister chromatids, providing directionality for type II topoisomerase-mediated strand exchanges toward chromatid decatenation. Required for decatenation of non-centromeric ultrafine DNA bridges during anaphase. Early in neurogenesis, may play an essential role to ensure accurate mitotic chromosome condensation in neuron stem cells, ultimately affecting neuron pool and cortex size. In Mus musculus (Mouse), this protein is Condensin complex subunit 1 (Ncapd2).